We begin with the raw amino-acid sequence, 228 residues long: MLCPPMALGPFLAAPVPRPPPSASEKKRICRNLFNNAPGDSNIDQLLAQEQHTQRLYVKERYGYDIQLESNRDADANTDADADTDAHCQVLRGMRYPTSRTISSTDADECNPKAVSQAPRGMALTPAQISASAKLILQKCPESDRKKSNGSADLANCTRHGQKPYARQPQGLKGMYNVRKTVNGISKPNVKNGYNNNNNSSSSNNNSNMNINNKIVDNGTSELADQKQ.

The Cytoplasmic segment spans residues 1–120 (MLCPPMALGP…NPKAVSQAPR (120 aa)). Residues 121 to 137 (GMALTPAQISASAKLIL) traverse the membrane as a helical; Signal-anchor for type II membrane protein segment. The Extracellular segment spans residues 138-228 (QKCPESDRKK…GTSELADQKQ (91 aa)). The tract at residues 141-228 (PESDRKKSNG…GTSELADQKQ (88 aa)) is disordered. N-linked (GlcNAc...) asparagine glycans are attached at residues N149, N156, N198, N199, N205, and N218. Over residues 195–213 (NNNNNSSSSNNNSNMNINN) the composition is skewed to low complexity. Residues 218–228 (NGTSELADQKQ) show a composition bias toward polar residues.

As to expression, expressed by a subset of glial cells found at the midline of the embryo stage 12 nervous system. Expression is highest during the formation of the embryonic axonal commissures, a process requiring midline glial cell function (at protein level).

Its subcellular location is the membrane. Has a role in intercellular carbohydrate-mediated cell adhesion. The polypeptide is Gliolectin (Drosophila melanogaster (Fruit fly)).